The following is a 422-amino-acid chain: Light-independent protochlorophyllide reductase subunit N (422 aa).

[4Fe-4S] cluster contacts are provided by Cys26, Cys51, and Cys112.

Belongs to the BchN/ChlN family. As to quaternary structure, protochlorophyllide reductase is composed of three subunits; BchL, BchN and BchB. Forms a heterotetramer of two BchB and two BchN subunits. Requires [4Fe-4S] cluster as cofactor.

The enzyme catalyses chlorophyllide a + oxidized 2[4Fe-4S]-[ferredoxin] + 2 ADP + 2 phosphate = protochlorophyllide a + reduced 2[4Fe-4S]-[ferredoxin] + 2 ATP + 2 H2O. The protein operates within porphyrin-containing compound metabolism; bacteriochlorophyll biosynthesis (light-independent). In terms of biological role, component of the dark-operative protochlorophyllide reductase (DPOR) that uses Mg-ATP and reduced ferredoxin to reduce ring D of protochlorophyllide (Pchlide) to form chlorophyllide a (Chlide). This reaction is light-independent. The NB-protein (BchN-BchB) is the catalytic component of the complex. This Acidiphilium rubrum protein is Light-independent protochlorophyllide reductase subunit N.